The following is a 1555-amino-acid chain: Bromodomain adjacent to zinc finger domain protein 1A (1555 aa).

The required for association with the CHRAC1/POLE3 complex stretch occupies residues 1 to 128 (MPLLHRKPFV…EETVEVIRNN (128 aa)). A required for interaction with the CHRAC1-POLE3 heterodimer. Required for interaction with the CHRAC1-POLE3 heterodimer region spans residues 1–128 (MPLLHRKPFV…EETVEVIRNN (128 aa)). The interval 1–133 (MPLLHRKPFV…VIRNNGTRLQ (133 aa)) is required for interaction with NCOR1. In terms of domain architecture, WAC spans 22 to 128 (EEVFYCKVTN…EETVEVIRNN (107 aa)). Phosphoserine is present on residues S270 and S284. Residues 422–488 (PEVFGDALMV…LTAIFQAMAE (67 aa)) enclose the DDT domain. Positions 635 to 701 (IEDYVDVLRQ…EDEQRNSAAV (67 aa)) form a coiled coil. Basic and acidic residues-rich tracts occupy residues 652 to 664 (LKAE…REAT) and 671 to 696 (RKEE…DEQR). The segment at 652–751 (LKAEQHRKER…KRSRRGKVGQ (100 aa)) is disordered. The interval 668–935 (IRRRKEEKLK…QEKSRICAQL (268 aa)) is interaction with SMARCA5. The segment at 668-935 (IRRRKEEKLK…QEKSRICAQL (268 aa)) is required for interaction with SMARCA5 and formation of the CHRAC ISWI chromatin remodeling complex. 2 stretches are compositionally biased toward acidic residues: residues 705-714 (GEEEREDFDT) and 728-737 (PDVVTEDEDD). T732 bears the Phosphothreonine mark. A coiled-coil region spans residues 773–798 (SADAEEALRQEQQQKEKELLDKIQSA). Disordered stretches follow at residues 843–874 (PSSF…SSLD) and 944–969 (HFSD…CDIS). Residues 864-873 (SFLSESTSSL) are compositionally biased toward low complexity. K954 participates in a covalent cross-link: Glycyl lysine isopeptide (Lys-Gly) (interchain with G-Cter in SUMO2). 2 positions are modified to phosphoserine: S962 and S963. Residues 1149–1199 (NARCKICRKKGDAENMVLCDGCDRGHHTYCVRPKLKAVPDGDWFCPECRPK) form a PHD-type zinc finger. The tract at residues 1203–1429 (RRLSSRQRPS…LNRRSSGRQG (227 aa)) is disordered. The segment covering 1214–1258 (ESDEEMEEGMEDDDDEVDDDDEEGQSEEEEYEVEQDEEDSDDDEA) has biased composition (acidic residues). A compositionally biased stretch (basic residues) spans 1263 to 1277 (KRGRPQVRLPIKTKG). The residue at position 1282 (S1282) is a Phosphoserine. Residues 1297 to 1313 (SRSQQSTPKNTAKSASK) are compositionally biased toward polar residues. Phosphoserine is present on residues S1320, S1339, S1352, S1370, S1401, S1412, and S1416. Residues 1369–1386 (HSPSFTNFRVSTSRSSRQ) are compositionally biased toward polar residues. Residues 1429–1532 (GGVHELSAFE…AFFHIQAQKL (104 aa)) form the Bromo domain. Position 1546 is a phosphothreonine (T1546).

The protein belongs to the WAL family. As to quaternary structure, component of the ACF-1 ISWI chromatin remodeling complex at least composed of SMARCA1 and BAZ1A, which regulates the spacing of histone octamers on the DNA template to facilitate access to DNA. Within the ACF-1 ISWI chromatin remodeling complex interacts with SMARCA1; the interaction is direct. Component of the ACF-5 ISWI chromatin remodeling complex (also called the ACF complex) at least composed of BAZ1A and SMARCA5/SNF2H, which regulates the spacing of histone octamers on the DNA template to facilitate access to DNA. Within the ACF-5 ISWI chromatin remodeling complex interacts with SMARCA5/SNF2H; the interaction is direct. Component of the CHRAC ISWI chromatin remodeling complex at least composed of SMARCA5/SNF2H, BAZ1A/ACF1, CHRAC1 and POLE3; the complex preferentially binds DNA through the CHRAC1-POLE3 heterodimer and possesses ATP-dependent nucleosome-remodeling activity. Within the complex interacts (via N-terminus) with POLE3-CHRAC1 heterodimer; the interaction is direct and is required for the complex to preferentially bind to DNA. Within the complex interacts with SMARCA5/SNF2H; the interaction is direct and promotes the interaction with the POLE3-CHRAC1 heterodimer. Interacts with NCOR1 (via its RD1 domain); the interaction corepresses a number of NCOR1-regulated genes.

It is found in the nucleus. Regulatory subunit of the ATP-dependent ACF-1 and ACF-5 ISWI chromatin remodeling complexes, which form ordered nucleosome arrays on chromatin and slide edge- and center-positioned histone octamers away from their original location on the DNA template to facilitate access to DNA during DNA-templated processes such as DNA replication, transcription, and repair. Both complexes regulate the spacing of nucleosomes along the chromatin and have the ability to slide mononucleosomes to the center of a DNA template in an ATP-dependent manner. The ACF-1 ISWI chromatin remodeling complex has a lower ATP hydrolysis rate than the ACF-5 ISWI chromatin remodeling complex. Has a role in sensing the length of DNA which flank nucleosomes, which modulates the nucleosome spacing activity of the ACF-5 ISWI chromatin remodeling complex. Involved in DNA replication and together with SMARCA5/SNF2H is required for replication of pericentric heterochromatin in S-phase. May have a role in nuclear receptor-mediated transcription repression. This Mus musculus (Mouse) protein is Bromodomain adjacent to zinc finger domain protein 1A (Baz1a).